Here is a 410-residue protein sequence, read N- to C-terminus: Neuroserpin (410 aa).

Positions Met-1–Val-16 are cleaved as a signal peptide. N-linked (GlcNAc...) asparagine glycans are attached at residues Asn-157, Asn-321, and Asn-401. O-linked (Xyl...) (chondroitin sulfate) serine glycosylation occurs at Ser-403.

The protein belongs to the serpin family. As to expression, detected in neurons in embryonic brain cortex (at protein level). During embryonic development mostly expressed in CNS. In adult expressed in brain and much less in spinal cord, heart, kidney and testis.

It localises to the secreted. Its subcellular location is the cytoplasmic vesicle. It is found in the secretory vesicle lumen. The protein localises to the perikaryon. Functionally, serine protease inhibitor that inhibits plasminogen activators and plasmin but not thrombin. May be involved in the formation or reorganization of synaptic connections as well as for synaptic plasticity in the adult nervous system. May protect neurons from cell damage by tissue-type plasminogen activator. The sequence is that of Neuroserpin (Serpini1) from Mus musculus (Mouse).